Reading from the N-terminus, the 473-residue chain is Flavin-dependent L-tryptophan oxidase RebO (473 aa).

Residues 1–21 (MSRGHKKITVLGAGVAGLVAA) form the signal peptide. Residues 15-16 (VA), 35-36 (EG), Arg-43, 61-64 (GAMR), Glu-444, and 451-456 (AWIDGA) contribute to the FAD site.

Belongs to the flavin monoamine oxidase family. RebO subfamily. Homodimer. FAD is required as a cofactor.

The enzyme catalyses 7-chloro-L-tryptophan + O2 = 3-(7-chloroindol-3-yl)-2-iminopropanoate + H2O2. The catalysed reaction is L-tryptophan + O2 = 2-iminio-3-(indol-3-yl)propanoate + H2O2. Functionally, involved in the biosynthesis of the indolocarbazole antitumor agent rebeccamycin. It generates the imine form of 7-chloroindole 3-pyruvate (7Cl-IPA) from 7-chloro-L-tryptophan (7Cl-Trp), with concomitant two-electron reduction of O(2) to H(2)O(2). The enzyme is also active with L-tryptophan as substrate. The sequence is that of Flavin-dependent L-tryptophan oxidase RebO (rebO) from Lentzea aerocolonigenes (Lechevalieria aerocolonigenes).